A 54-amino-acid polypeptide reads, in one-letter code: Conotoxin Cal6.17 (54 aa).

The N-terminal stretch at 1–19 (MSGTGVLLLTLLLLVTMAT) is a signal peptide. 3 cysteine pairs are disulfide-bonded: Cys-24/Cys-39, Cys-32/Cys-49, and Cys-38/Cys-53.

As to expression, expressed by the venom duct.

The protein localises to the secreted. Probable neurotoxin. The chain is Conotoxin Cal6.17 from Californiconus californicus (California cone).